The primary structure comprises 213 residues: Large ribosomal subunit protein uL3 (213 aa).

This sequence belongs to the universal ribosomal protein uL3 family. Part of the 50S ribosomal subunit. Forms a cluster with proteins L14 and L19.

Functionally, one of the primary rRNA binding proteins, it binds directly near the 3'-end of the 23S rRNA, where it nucleates assembly of the 50S subunit. The protein is Large ribosomal subunit protein uL3 of Petrotoga mobilis (strain DSM 10674 / SJ95).